The sequence spans 156 residues: Ribosomal RNA large subunit methyltransferase H (156 aa).

S-adenosyl-L-methionine-binding positions include Leu73, Gly104, and 123–128; that span reads ISSMTL.

Belongs to the RNA methyltransferase RlmH family. As to quaternary structure, homodimer.

The protein localises to the cytoplasm. The catalysed reaction is pseudouridine(1915) in 23S rRNA + S-adenosyl-L-methionine = N(3)-methylpseudouridine(1915) in 23S rRNA + S-adenosyl-L-homocysteine + H(+). Functionally, specifically methylates the pseudouridine at position 1915 (m3Psi1915) in 23S rRNA. In Burkholderia ambifaria (strain MC40-6), this protein is Ribosomal RNA large subunit methyltransferase H.